Reading from the N-terminus, the 204-residue chain is MPPKTKEKGTKAGAQKKKRNAGADVEAESMRRLALLEKEVLQDCLALQRDEARRAKASEDQLKQRIKDLEAELEGARSEGKAIYAEMSRQCRSLQEAMQSRSRQLEEEVEGLREQLELCQREAEAAQREAKQALGERDQTLAQFRAHVADMEAKYEEILHDSLDRLLAKLRDEASVGRGCAETPHQAQGAAPPVWTQPPGSLKL.

Residues 1–10 (MPPKTKEKGT) are compositionally biased toward basic and acidic residues. Residues 1 to 26 (MPPKTKEKGTKAGAQKKKRNAGADVE) form a disordered region. Positions 45–159 (LALQRDEARR…DMEAKYEEIL (115 aa)) form a coiled coil. A disordered region spans residues 175-204 (SVGRGCAETPHQAQGAAPPVWTQPPGSLKL).

This sequence belongs to the DRC12 family. In terms of assembly, component of the nexin-dynein regulatory complex (N-DRC).

The protein localises to the cytoplasm. It localises to the cytoskeleton. The protein resides in the flagellum axoneme. Its function is as follows. Component of the nexin-dynein regulatory complex (N-DRC), a key regulator of ciliary/flagellar motility which maintains the alignment and integrity of the distal axoneme and regulates microtubule sliding in motile axonemes. The chain is Dynein regulatory complex protein 12 (DRC12) from Bos taurus (Bovine).